A 544-amino-acid polypeptide reads, in one-letter code: 4-coumarate:CoA ligase 1 (544 aa).

This sequence belongs to the ATP-dependent AMP-binding enzyme family. As to quaternary structure, monomer. Mostly expressed in flower organs, with highest levels in corollas, and, to a lesser extent, in tubes, sepals, pistils, stamen and ovaries. Also present at low levels in leaves.

The protein localises to the cytoplasm. It localises to the cytosol. The catalysed reaction is (E)-4-coumarate + ATP + CoA = (E)-4-coumaroyl-CoA + AMP + diphosphate. It carries out the reaction (E)-caffeate + ATP + CoA = (E)-caffeoyl-CoA + AMP + diphosphate. The enzyme catalyses benzoate + ATP + CoA = benzoyl-CoA + AMP + diphosphate. It catalyses the reaction (E)-cinnamate + ATP + CoA = (E)-cinnamoyl-CoA + AMP + diphosphate. The catalysed reaction is (E)-ferulate + ATP + CoA = (E)-feruloyl-CoA + AMP + diphosphate. It participates in phenylpropanoid metabolism; trans-cinnamate biosynthesis. The protein operates within phytoalexin biosynthesis; 3,4',5-trihydroxystilbene biosynthesis; 3,4',5-trihydroxystilbene from trans-4-coumarate: step 1/2. In terms of biological role, catalyzes the formation of CoA esters of trans-cinnamic acid, 4-coumaric acid, ferulic acid, benzoic acid and caffeic acid. This is 4-coumarate:CoA ligase 1 from Petunia hybrida (Petunia).